The following is an 88-amino-acid chain: MASVVPLKEKKLLEVKLGELPSWILMRDFTPSGIAGAFQRGYYRYYNKYVNVKKGSIAGLSMVLAAYVFLNYCRSYKELKHERLRKYH.

Ala2 is modified (N-acetylalanine). A Phosphoserine modification is found at Ser3. At Lys16 the chain carries N6-acetyllysine. Residues 62 to 79 (MVLAAYVFLNYCRSYKEL) traverse the membrane as a helical segment.

As to quaternary structure, component of the ATP synthase complex composed at least of ATP5F1A/subunit alpha, ATP5F1B/subunit beta, ATP5MC1/subunit c (homooctomer), MT-ATP6/subunit a, MT-ATP8/subunit 8, ATP5ME/subunit e, ATP5MF/subunit f, ATP5MG/subunit g, ATP5MK/subunit k, ATP5MJ/subunit j, ATP5F1C/subunit gamma, ATP5F1D/subunit delta, ATP5F1E/subunit epsilon, ATP5PF/subunit F6, ATP5PB/subunit b, ATP5PD/subunit d, ATP5PO/subunit OSCP. ATP synthase complex consists of a soluble F(1) head domain (subunits alpha(3) and beta(3)) - the catalytic core - and a membrane F(0) domain - the membrane proton channel (subunits c, a, 8, e, f, g, k and j). These two domains are linked by a central stalk (subunits gamma, delta, and epsilon) rotating inside the F1 region and a stationary peripheral stalk (subunits F6, b, d, and OSCP).

The protein localises to the mitochondrion. Its subcellular location is the mitochondrion inner membrane. Subunit f, of the mitochondrial membrane ATP synthase complex (F(1)F(0) ATP synthase or Complex V) that produces ATP from ADP in the presence of a proton gradient across the membrane which is generated by electron transport complexes of the respiratory chain. ATP synthase complex consist of a soluble F(1) head domain - the catalytic core - and a membrane F(1) domain - the membrane proton channel. These two domains are linked by a central stalk rotating inside the F(1) region and a stationary peripheral stalk. During catalysis, ATP synthesis in the catalytic domain of F(1) is coupled via a rotary mechanism of the central stalk subunits to proton translocation. In vivo, can only synthesize ATP although its ATP hydrolase activity can be activated artificially in vitro. Part of the complex F(0) domain. The polypeptide is ATP synthase F(0) complex subunit f, mitochondrial (Bos taurus (Bovine)).